Reading from the N-terminus, the 2227-residue chain is Genome polyprotein (2227 aa).

2 consecutive short sequence motifs ((L)YPX(n)L motif) follow at residues 167–171 and 200–205; these read YPHGL and YPVWEL. Residues 766–836 are involved in P1-2A pentamerization; the sequence is MMSRIAAGDL…PRKMKGLFSQ (71 aa). Residues 1011 to 1031 form a helical membrane-spanning segment; the sequence is TVEIINTVLCFVKSGILLYVI. The interval 1043–1070 is membrane-penetrating ability; the sequence is IGLLRVMNYADIGCSVISCGKVFSKMLE. Residues 1127–1152 adopt a coiled-coil conformation; it reads KKKDILNILKDNQQKIEKAIEEADNF. An SF3 helicase domain is found at 1204–1366; it reads HQKLKNLGSI…SFFKNPHNDM (163 aa). Residue 1230 to 1237 participates in ATP binding; it reads GKRGGGKS. Residues 1462-1482 form a helical membrane-spanning segment; that stretch reads WVAVGAAVGILGVLVGGWFVY. The residue at position 1499 (Tyr1499) is an O-(5'-phospho-RNA)-tyrosine. Positions 1514–1728 constitute a Peptidase C3 domain; that stretch reads DPVESQSTLE…VAKLVTQEMF (215 aa). Residues His1563, Asp1603, and Cys1691 each act as for protease 3C activity in the active site. The RdRp catalytic domain occupies 1976–2097; it reads DVGLDLDFSA…VFSRDVQIDN (122 aa).

The protein belongs to the picornaviridae polyprotein family. Homodimer. Homomultimer; probably interacts with membranes in a multimeric form. Seems to assemble into amyloid-like fibers. In terms of assembly, homodimer. Monomer. Interacts with protein 3CD. As to quaternary structure, interacts with host ACBD3. Interacts with protein 3AB. In terms of assembly, interacts with human MAVS. As to quaternary structure, homodimer; disulfide-linked. Homopentamer. Homooligomer. In terms of assembly, interacts with capsid protein VP2. Interacts with capsid protein VP3. As to quaternary structure, interacts with capsid protein VP1. Interacts with capsid protein VP3. Interacts with capsid protein VP1. Interacts with capsid protein VP2. Specific enzymatic cleavages by viral protease in vivo yield a variety of precursors and mature proteins. Polyprotein processing intermediates are produced, such as P1-2A which is a functional precursor of the structural proteins, VP0 which is a VP4-VP2 precursor, VP1-2A precursor, 3ABC precursor which is a stable and catalytically active precursor of 3A, 3B and 3C proteins, 3AB and 3CD precursors. The assembly signal 2A is removed from VP1-2A by a host protease, possibly host Cathepsin L. This cleavage occurs over a region of 3 amino-acids probably generating VP1 proteins with heterogeneous C-termini. Post-translationally, during virion maturation, immature virions are rendered infectious following cleavage of VP0 into VP4 and VP2. This maturation seems to be an autocatalytic event triggered by the presence of RNA in the capsid and is followed by a conformational change of the particle. In terms of processing, the assembly signal 2A is removed from VP1-2A by a host protease, possibly host Cathepsin L in naked virions. This cleavage does not occur in enveloped virions. This cleavage occurs over a region of 3 amino-acids probably generating VP1 proteins with heterogeneous C-termini. VPg is uridylylated prior to priming replication into VPg-pUpU. Post-translationally, unlike other picornaviruses, does not seem to be myristoylated.

It localises to the virion. Its subcellular location is the host endosome. It is found in the host multivesicular body. The protein resides in the host membrane. The protein localises to the host mitochondrion outer membrane. It localises to the host cytoplasm. Its subcellular location is the host cytoplasmic vesicle membrane. It carries out the reaction RNA(n) + a ribonucleoside 5'-triphosphate = RNA(n+1) + diphosphate. It catalyses the reaction a ribonucleoside 5'-triphosphate + H2O = a ribonucleoside 5'-diphosphate + phosphate + H(+). The catalysed reaction is Selective cleavage of Gln-|-Gly bond in the poliovirus polyprotein. In other picornavirus reactions Glu may be substituted for Gln, and Ser or Thr for Gly.. Its function is as follows. Capsid proteins VP1, VP2, and VP3 form a closed capsid enclosing the viral positive strand RNA genome. All these proteins contain a beta-sheet structure called beta-barrel jelly roll. Together they form an icosahedral capsid (T=3) composed of 60 copies of each VP1, VP2, and VP3, with a diameter of approximately 300 Angstroms. VP1 is situated at the 12 fivefold axes, whereas VP2 and VP3 are located at the quasi-sixfold axes. The naked capsid interacts with the host receptor HAVCR1 to provide virion attachment to and probably entry into the target cell. In terms of biological role, VP0 precursor is a component of the immature procapsids. Plays a role in the assembly of the 12 pentamers into an icosahedral structure. Has not been detected in mature virions, supposedly owing to its small size. Functionally, precursor component of immature procapsids that corresponds to an extended form of the structural protein VP1. After maturation, possibly by the host Cathepsin L, the assembly signal 2A is cleaved to give rise to the mature VP1 protein. Its function is as follows. Functions as a viroporin. Affects membrane integrity and causes an increase in membrane permeability. Involved in host intracellular membrane rearrangements probably to give rise to the viral factories. Does not disrupt calcium homeostasis or glycoprotein trafficking. Antagonizes the innate immune response of the host by suppressing IFN-beta synthesis, which it achieves by interfering with the RIG-I/IFIH1 pathway. In terms of biological role, affects membrane integrity and causes an increase in membrane permeability. Associates with and induces structural rearrangements of intracellular membranes. Displays RNA-binding activity. Functionally, the precursor 3ABC is targeted to the mitochondrial membrane where protease 3C activity cleaves and inhibits the host antiviral protein MAVS, thereby disrupting activation of IRF3 through the IFIH1/MDA5 pathway. In vivo, the protease activity of 3ABC precursor is more efficient in cleaving the 2BC precursor than that of protein 3C. The 3ABC precursor may therefore play a role in the proteolytic processing of the polyprotein. Possible viroporin. Its function is as follows. Interacts with the 3CD precursor and with RNA structures found at both the 5'- and 3'-termini of the viral genome. Since the 3AB precursor contains the hydrophobic domain 3A, it probably anchors the whole viral replicase complex to intracellular membranes on which viral RNA synthesis occurs. In terms of biological role, may serve as membrane anchor to the 3AB and 3ABC precursors via its hydrophobic domain. May interact with RNA. Acts as a primer for viral RNA replication and remains covalently bound to viral genomic RNA. VPg is uridylylated prior to priming replication into VPg-pUpU. The VPg-pUpU is then used as primer on the genomic RNA poly(A) by the RNA-dependent RNA polymerase to replicate the viral genome. Functionally, cysteine protease that generates mature viral proteins from the precursor polyprotein. In addition to its proteolytic activity, it binds to viral RNA, and thus influences viral genome replication. RNA and substrate bind cooperatively to the protease. Cleaves IKBKG/NEMO to impair innate immune signaling. Cleaves host PABPC1 which may participate in the switch of viral translation to RNA synthesis. Its function is as follows. Interacts with the 3AB precursor and with RNA structures found at both the 5'- and 3'-termini of the viral genome. Disrupts TLR3 signaling by degrading the host adapter protein TICAM1/TRIF. In terms of biological role, RNA-directed RNA polymerase 3D-POL replicates genomic and antigenomic RNA by recognizing replications specific signals. The polypeptide is Genome polyprotein (Human hepatitis A virus genotype IA (isolate H2) (HHAV)).